A 1322-amino-acid chain; its full sequence is C-Jun-amino-terminal kinase-interacting protein 3 (1322 aa).

An RH1 domain is found at V12–L100. A kinesin-binding domain (KBD); essential for its function in axon elongation region spans residues E50–L80. Positions L66–R167 form a coiled coil. Disordered stretches follow at residues K183–V211 and S245–N317. The JNK-binding domain (JBD); essential for its function in axon elongation stretch occupies residues N210–K226. Residues S261–T270 are compositionally biased toward low complexity. Phosphothreonine is present on residues T266, T276, and T287. The segment covering G271–P282 has biased composition (polar residues). Residues N305–S315 show a composition bias toward basic residues. S315, S365, and S366 each carry phosphoserine. The segment at Q424–A459 is leucine zipper-like domain (LZ); essential for its function in axon elongation. A coiled-coil region spans residues V443–A534. The tract at residues A459–A515 is interaction with NTRK2. The RH2 domain maps to R506–P580. A phosphoserine mark is found at S588 and S662. Disordered stretches follow at residues W704–A754, P844–S952, and R1281–A1307. A compositionally biased stretch (basic and acidic residues) spans L724–P750. Positions A914 to Q937 are enriched in polar residues. The segment covering E941–S952 has biased composition (low complexity). A compositionally biased stretch (acidic residues) spans G1285–T1294.

This sequence belongs to the JIP scaffold family. Forms homo- or heterooligomeric complexes. The central region of MAPK8IP3 interacts with the C-terminal of MAPK8IP2 but not MAPK8IP1. Binds specific components of the JNK signaling pathway namely MAPK8/JNK1, MAPK9/JNK2 and MAPK10/JNK3 to the N-terminal region, MAP2K4/MKK4 and MAP2K7/MKK7 to the central region and MAP3K11 to the C-terminal region. Binds the TPR motif-containing C-terminal of kinesin light chain, KLC1. Pre-assembled MAPK8IP1 scaffolding complexes are then transported as a cargo of kinesin, to the required subcellular location. Interacts with ROCK1 and this interaction is enhanced by ultraviolet-B (UVB) radiation. Interacts with SH3RF2. Interacts with NTRK3/TRKC. Interacts with NTRK2/TRKB. In terms of processing, phosphorylation by ROCK1 is crucial for the recruitment of JNK.

The protein resides in the cytoplasm. It localises to the golgi apparatus. The protein localises to the cytoplasmic vesicle. Its subcellular location is the cell projection. It is found in the growth cone. The protein resides in the axon. It localises to the dendrite. The protein localises to the perinuclear region. The JNK-interacting protein (JIP) group of scaffold proteins selectively mediates JNK signaling by aggregating specific components of the MAPK cascade to form a functional JNK signaling module. May function as a regulator of vesicle transport, through interactions with the JNK-signaling components and motor proteins. Promotes neuronal axon elongation in a kinesin- and JNK-dependent manner. Activates cofilin at axon tips via local activation of JNK, thereby regulating filopodial dynamics and enhancing axon elongation. Its binding to kinesin heavy chains (KHC), promotes kinesin-1 motility along microtubules and is essential for axon elongation and regeneration. Regulates cortical neuronal migration by mediating NTRK2/TRKB anterograde axonal transport during brain development. Acts as an adapter that bridges the interaction between NTRK2/TRKB and KLC1 and drives NTRK2/TRKB axonal but not dendritic anterograde transport, which is essential for subsequent BDNF-triggered signaling and filopodia formation. The protein is C-Jun-amino-terminal kinase-interacting protein 3 (Mapk8ip3) of Rattus norvegicus (Rat).